Here is a 315-residue protein sequence, read N- to C-terminus: Jacalin-related lectin 10 (315 aa).

Residues 1 to 23 form the signal peptide; it reads MVIIYIFLFLSSAIIDSTGLAKA. 2 consecutive Jacalin-type lectin domains span residues 24-165 and 168-312; these read QKLD…YLTT and PTKS…YFSP.

The protein belongs to the jacalin lectin family.

This is Jacalin-related lectin 10 (JAL10) from Arabidopsis thaliana (Mouse-ear cress).